Consider the following 350-residue polypeptide: Phenylalanine--tRNA ligase alpha subunit (350 aa).

Glu-271 is a binding site for Mg(2+).

This sequence belongs to the class-II aminoacyl-tRNA synthetase family. Phe-tRNA synthetase alpha subunit type 1 subfamily. As to quaternary structure, tetramer of two alpha and two beta subunits. The cofactor is Mg(2+).

It is found in the cytoplasm. The catalysed reaction is tRNA(Phe) + L-phenylalanine + ATP = L-phenylalanyl-tRNA(Phe) + AMP + diphosphate + H(+). This Verminephrobacter eiseniae (strain EF01-2) protein is Phenylalanine--tRNA ligase alpha subunit.